The sequence spans 320 residues: uncharacterized protein (320 aa).

This sequence belongs to the anthranilate phosphoribosyltransferase family.

This is an uncharacterized protein from Escherichia coli (strain K12).